A 607-amino-acid polypeptide reads, in one-letter code: MPRIHVLPPGLVNQIAAGEVVERPASIVKELVENALDAGATSVGVDVEEGGLALVRVADDGSGMDRDDALLALERHATSKLRDAEGLAAIGTMGFRGEAVPAIASVSRFRLDTSAGEDGAGTRVEIEGGVLGEVAPVARPRGTTVEVRDLFFNTPARRKFMRAASTEAGHVSEAVIRLALARPDVGFTLRSGGRLVLGARAGGGLADRAGQALGREAHRHLLPVDARRGEVRVHGLICSPDHSEATGRALYLFVNGRYVRDRAAAHAVLRAFAGTLPPGRHPAGVLFVELPLHRVDVNVHPQKLEVRFAEGREVFDALFHTVAGALRTAPWLRARPQPGDGVPVGDGGGPAPVPVAGEEAAEVLAWARAARPPEGSGATLVQPAPGAWATGRLAFPVVPAPGAGPEAGPRPEGYFAGLRYVGQHARTYLLCEAPGGTLVVIDQHASHERMLFHRLREAFRARRIPVQPFLLPQVVTLPPAAARALEAGLAELGRLGFDAEPFGGEAFAVKGAPAALAGVDLTALLTDLGSQLAEVERGSAVDDAFHDLLATMACHAAVRANQDVSPEEARALLDGLDAIDFKARCPHGRPVVFELSLADLERRVGRR.

It belongs to the DNA mismatch repair MutL/HexB family.

Its function is as follows. This protein is involved in the repair of mismatches in DNA. It is required for dam-dependent methyl-directed DNA mismatch repair. May act as a 'molecular matchmaker', a protein that promotes the formation of a stable complex between two or more DNA-binding proteins in an ATP-dependent manner without itself being part of a final effector complex. The chain is DNA mismatch repair protein MutL from Anaeromyxobacter sp. (strain K).